The following is a 161-amino-acid chain: Phosphopantetheine adenylyltransferase (161 aa).

Residue Ser-9 coordinates substrate. Residues 9 to 10 (SF) and His-17 each bind ATP. Residues Lys-41, Leu-73, and Arg-87 each contribute to the substrate site. Residues 88 to 90 (GIR), Glu-98, and 123 to 129 (TGFISST) each bind ATP.

It belongs to the bacterial CoaD family. Homohexamer. It depends on Mg(2+) as a cofactor.

It localises to the cytoplasm. It carries out the reaction (R)-4'-phosphopantetheine + ATP + H(+) = 3'-dephospho-CoA + diphosphate. It functions in the pathway cofactor biosynthesis; coenzyme A biosynthesis; CoA from (R)-pantothenate: step 4/5. Reversibly transfers an adenylyl group from ATP to 4'-phosphopantetheine, yielding dephospho-CoA (dPCoA) and pyrophosphate. The polypeptide is Phosphopantetheine adenylyltransferase (Psychromonas ingrahamii (strain DSM 17664 / CCUG 51855 / 37)).